The chain runs to 373 residues: 3 beta-hydroxysteroid dehydrogenase/Delta 5--&gt;4-isomerase type 1 (373 aa).

Residues Gly-10–Val-15, Tyr-155, and Lys-159 each bind NADP(+). Lys-159 serves as the catalytic Proton donor. A helical membrane pass occupies residues Leu-288–Val-308.

This sequence belongs to the 3-beta-HSD family. In terms of tissue distribution, steroidogenic tissues (includes testes, ovaries and adrenal glands).

Its subcellular location is the endoplasmic reticulum membrane. The protein resides in the mitochondrion membrane. It catalyses the reaction a 3beta-hydroxy-Delta(5)-steroid + NAD(+) = a 3-oxo-Delta(5)-steroid + NADH + H(+). The catalysed reaction is pregnenolone + NAD(+) = pregn-5-ene-3,20-dione + NADH + H(+). It carries out the reaction 3beta-hydroxyandrost-5-en-17-one + NAD(+) = androst-5-ene-3,17-dione + NADH + H(+). The enzyme catalyses androst-5-en-3beta,17beta-diol + NAD(+) = 17beta-hydroxy-androst-5-en-3-one + NADH + H(+). It catalyses the reaction a 3beta-hydroxysteroid + NADP(+) = a 3-oxosteroid + NADPH + H(+). The catalysed reaction is 5alpha-androstane-3beta,17beta-diol + NADP(+) = 17beta-hydroxy-5alpha-androstan-3-one + NADPH + H(+). It carries out the reaction 3beta-hydroxy-5alpha-androstan-17-one + NADP(+) = 5alpha-androstan-3,17-dione + NADPH + H(+). The enzyme catalyses a 3-oxo-Delta(5)-steroid = a 3-oxo-Delta(4)-steroid. It catalyses the reaction pregn-5-ene-3,20-dione = progesterone. The catalysed reaction is androst-5-ene-3,17-dione = androst-4-ene-3,17-dione. It carries out the reaction 17beta-hydroxy-androst-5-en-3-one = testosterone. The enzyme catalyses 5alpha-androstane-3beta,17beta-diol + NAD(+) = 17beta-hydroxy-5alpha-androstan-3-one + NADH + H(+). It functions in the pathway steroid hormone biosynthesis. The protein operates within steroid metabolism. In terms of biological role, a bifunctional enzyme responsible for the oxidation and isomerization of 3beta-hydroxy-Delta(5)-steroid precursors to 3-oxo-Delta(4)-steroids, an essential step in steroid hormone biosynthesis. Specifically catalyzes the conversion of pregnenolone to progesterone, 17alpha-hydroxypregnenolone to 17alpha-hydroxyprogesterone, dehydroepiandrosterone (DHEA) to 4-androstenedione, and androstenediol to testosterone. Additionally, catalyzes the interconversion between 3beta-hydroxy and 3-oxo-5alpha-androstane steroids controlling the bioavalability of the active forms. Specifically converts dihydrotestosterone to its inactive form 5alpha-androstanediol, that does not bind androgen receptor/AR. Also converts androstanedione, a precursor of testosterone and estrone, to epiandrosterone. Expected to use NAD(+) as preferred electron donor for the 3-beta-hydroxy-steroid dehydrogenase activity and NADPH for the 3-ketosteroid reductase activity. The polypeptide is 3 beta-hydroxysteroid dehydrogenase/Delta 5--&gt;4-isomerase type 1 (Mus musculus (Mouse)).